The following is a 114-amino-acid chain: Transmembrane protein 14DP (114 aa).

The next 4 helical transmembrane spans lie at 8 to 28 (LVPLHWFGFGYTALVVSGGIV), 36 to 56 (APSLAAGLLFGSLAGVGAYQL), 63 to 80 (VWDFLAATSVTFVGIMGM), and 83 to 103 (YYYGKFMPVGLIAGASLLMAA).

This sequence belongs to the TMEM14 family.

The protein resides in the membrane. This chain is Transmembrane protein 14DP (TMEM14DP), found in Homo sapiens (Human).